We begin with the raw amino-acid sequence, 292 residues long: Histamine N-methyltransferase (292 aa).

Residue Glu28 coordinates substrate. S-adenosyl-L-methionine is bound by residues Gly60, Glu89, Gln94, Ser120, and Ile142. Residue Asn283 participates in substrate binding.

It belongs to the class I-like SAM-binding methyltransferase superfamily. HNMT family. In terms of assembly, monomer.

The protein resides in the cytoplasm. The enzyme catalyses histamine + S-adenosyl-L-methionine = N(tau)-methylhistamine + S-adenosyl-L-homocysteine + H(+). Its function is as follows. Inactivates histamine by N-methylation. Plays an important role in degrading histamine and in regulating the airway response to histamine. This chain is Histamine N-methyltransferase (HNMT), found in Bos taurus (Bovine).